The chain runs to 426 residues: Histidinol dehydrogenase (426 aa).

NAD(+)-binding residues include tyrosine 130, glutamine 187, and asparagine 210. The substrate site is built by serine 233, glutamine 255, and histidine 258. Positions 255 and 258 each coordinate Zn(2+). Catalysis depends on proton acceptor residues glutamate 323 and histidine 324. Histidine 324, aspartate 357, glutamate 411, and histidine 416 together coordinate substrate. Zn(2+) is bound at residue aspartate 357. Histidine 416 serves as a coordination point for Zn(2+).

It belongs to the histidinol dehydrogenase family. Zn(2+) serves as cofactor.

It catalyses the reaction L-histidinol + 2 NAD(+) + H2O = L-histidine + 2 NADH + 3 H(+). Its pathway is amino-acid biosynthesis; L-histidine biosynthesis; L-histidine from 5-phospho-alpha-D-ribose 1-diphosphate: step 9/9. Functionally, catalyzes the sequential NAD-dependent oxidations of L-histidinol to L-histidinaldehyde and then to L-histidine. In Aquifex aeolicus (strain VF5), this protein is Histidinol dehydrogenase (hisD).